The primary structure comprises 245 residues: Venom nerve growth factor 1 (245 aa).

A signal peptide spans 1-18; the sequence is MSMLCYTLIIAFLIGIWA. A propeptide spanning residues 19–125 is cleaved from the precursor; it reads APKSEDNVPL…ALNRNIRAKR (107 aa). A compositionally biased stretch (basic and acidic residues) spans 47-66; the sequence is GLKTSRNTDQRHPAPKKAED. The segment at 47-69 is disordered; the sequence is GLKTSRNTDQRHPAPKKAEDQEL. Disulfide bonds link cysteine 139-cysteine 206, cysteine 182-cysteine 234, and cysteine 194-cysteine 236. N-linked (GlcNAc...) asparagine glycans are attached at residues asparagine 148 and asparagine 151.

The protein belongs to the NGF-beta family. As to quaternary structure, homodimer; non-covalently linked. As to expression, expressed by the venom gland.

Its subcellular location is the secreted. Its function is as follows. Nerve growth factor is important for the development and maintenance of the sympathetic and sensory nervous systems. It stimulates division and differentiation of sympathetic and embryonic sensory neurons as well as basal forebrain cholinergic neurons in the brain. Its relevance in the snake venom is not clear. However, it has been shown to inhibit metalloproteinase-dependent proteolysis of platelet glycoprotein Ib alpha, suggesting a metalloproteinase inhibition to prevent metalloprotease autodigestion and/or protection against prey proteases. Binds a lipid between the two protein chains in the homodimer. The lipid-bound form promotes histamine relase from mouse mast cells, contrary to the lipid-free form. The protein is Venom nerve growth factor 1 of Tropidechis carinatus (Australian rough-scaled snake).